Reading from the N-terminus, the 236-residue chain is tRNA (guanine-N(1)-)-methyltransferase (236 aa).

Residues glycine 110 and 129–134 (LGDFVL) each bind S-adenosyl-L-methionine.

It belongs to the RNA methyltransferase TrmD family. Homodimer.

The protein resides in the cytoplasm. It catalyses the reaction guanosine(37) in tRNA + S-adenosyl-L-methionine = N(1)-methylguanosine(37) in tRNA + S-adenosyl-L-homocysteine + H(+). Functionally, specifically methylates guanosine-37 in various tRNAs. The protein is tRNA (guanine-N(1)-)-methyltransferase of Clostridium perfringens (strain SM101 / Type A).